The primary structure comprises 377 residues: Anhydro-N-acetylmuramic acid kinase (377 aa).

18 to 25 contacts ATP; it reads GTSADGID.

This sequence belongs to the anhydro-N-acetylmuramic acid kinase family.

The catalysed reaction is 1,6-anhydro-N-acetyl-beta-muramate + ATP + H2O = N-acetyl-D-muramate 6-phosphate + ADP + H(+). Its pathway is amino-sugar metabolism; 1,6-anhydro-N-acetylmuramate degradation. The protein operates within cell wall biogenesis; peptidoglycan recycling. Its function is as follows. Catalyzes the specific phosphorylation of 1,6-anhydro-N-acetylmuramic acid (anhMurNAc) with the simultaneous cleavage of the 1,6-anhydro ring, generating MurNAc-6-P. Is required for the utilization of anhMurNAc either imported from the medium or derived from its own cell wall murein, and thus plays a role in cell wall recycling. In Xanthomonas campestris pv. campestris (strain 8004), this protein is Anhydro-N-acetylmuramic acid kinase.